Consider the following 427-residue polypeptide: Serine--tRNA ligase (427 aa).

233–235 serves as a coordination point for L-serine; it reads TAE. 264–266 is an ATP binding site; the sequence is RSE. Position 287 (E287) interacts with L-serine. Residue 351-354 participates in ATP binding; it reads EISS. S386 contributes to the L-serine binding site.

This sequence belongs to the class-II aminoacyl-tRNA synthetase family. Type-1 seryl-tRNA synthetase subfamily. In terms of assembly, homodimer. The tRNA molecule binds across the dimer.

The protein resides in the cytoplasm. The enzyme catalyses tRNA(Ser) + L-serine + ATP = L-seryl-tRNA(Ser) + AMP + diphosphate + H(+). It catalyses the reaction tRNA(Sec) + L-serine + ATP = L-seryl-tRNA(Sec) + AMP + diphosphate + H(+). Its pathway is aminoacyl-tRNA biosynthesis; selenocysteinyl-tRNA(Sec) biosynthesis; L-seryl-tRNA(Sec) from L-serine and tRNA(Sec): step 1/1. Catalyzes the attachment of serine to tRNA(Ser). Is also able to aminoacylate tRNA(Sec) with serine, to form the misacylated tRNA L-seryl-tRNA(Sec), which will be further converted into selenocysteinyl-tRNA(Sec). The polypeptide is Serine--tRNA ligase (Dechloromonas aromatica (strain RCB)).